Reading from the N-terminus, the 247-residue chain is Small ribosomal subunit protein uS2 (247 aa).

The protein belongs to the universal ribosomal protein uS2 family.

This chain is Small ribosomal subunit protein uS2, found in Pseudomonas syringae pv. tomato (strain ATCC BAA-871 / DC3000).